Reading from the N-terminus, the 141-residue chain is Regulator of ribonuclease activity B (141 aa).

Residues 119-132 (DEDFDDEDDDEDYD) show a composition bias toward acidic residues. The disordered stretch occupies residues 119–141 (DEDFDDEDDDEDYDKDGFPIERH).

The protein belongs to the RraB family. Interacts with the C-terminal region of Rne.

It is found in the cytoplasm. In terms of biological role, globally modulates RNA abundance by binding to RNase E (Rne) and regulating its endonucleolytic activity. Can modulate Rne action in a substrate-dependent manner by altering the composition of the degradosome. The polypeptide is Regulator of ribonuclease activity B (Shewanella amazonensis (strain ATCC BAA-1098 / SB2B)).